The sequence spans 257 residues: Imidazole glycerol phosphate synthase subunit HisF (257 aa).

Active-site residues include aspartate 12 and aspartate 131.

The protein belongs to the HisA/HisF family. In terms of assembly, heterodimer of HisH and HisF.

It is found in the cytoplasm. The catalysed reaction is 5-[(5-phospho-1-deoxy-D-ribulos-1-ylimino)methylamino]-1-(5-phospho-beta-D-ribosyl)imidazole-4-carboxamide + L-glutamine = D-erythro-1-(imidazol-4-yl)glycerol 3-phosphate + 5-amino-1-(5-phospho-beta-D-ribosyl)imidazole-4-carboxamide + L-glutamate + H(+). Its pathway is amino-acid biosynthesis; L-histidine biosynthesis; L-histidine from 5-phospho-alpha-D-ribose 1-diphosphate: step 5/9. IGPS catalyzes the conversion of PRFAR and glutamine to IGP, AICAR and glutamate. The HisF subunit catalyzes the cyclization activity that produces IGP and AICAR from PRFAR using the ammonia provided by the HisH subunit. This is Imidazole glycerol phosphate synthase subunit HisF from Burkholderia ambifaria (strain MC40-6).